A 164-amino-acid polypeptide reads, in one-letter code: Protein phosphatase 1 regulatory subunit 14C (164 aa).

Residues 1-19 (MSVVTGGGEAAGGGGGGGA) are compositionally biased toward gly residues. The tract at residues 1 to 70 (MSVVTGGGEA…QQQRRHQQGK (70 aa)) is disordered. S2 is modified (N-acetylserine). A Phosphoserine modification is found at S25. Omega-N-methylarginine is present on R27. Residue S33 is modified to Phosphoserine. Positions 50–62 (VTTVAAAGQVQQQ) are enriched in low complexity. At T72 the chain carries Phosphothreonine; by ILK1.

The protein belongs to the PP1 inhibitor family. In terms of processing, the main inhibitory site appears to be Thr-72. Has over 600-fold higher inhibitory activity when phosphorylated, creating a molecular switch for regulating the phosphorylation status of PPP1CA substrates and smooth muscle contraction. Detected in heart, muscle, spinal cord, hippocampus, hypothalamus, thalamus, midbrain, brain stem, cerebellum, brain cortex and olfactory bulb.

Its subcellular location is the endomembrane system. Functionally, inhibitor of the PP1 regulatory subunit PPP1CA. This Mus musculus (Mouse) protein is Protein phosphatase 1 regulatory subunit 14C (Ppp1r14c).